A 148-amino-acid polypeptide reads, in one-letter code: Thiol-disulfide oxidoreductase YkuV (148 aa).

The 144-residue stretch at 2–145 (KLRQPMPELT…LEKRVNRVLA (144 aa)) folds into the Thioredoxin domain. C41 and C44 are disulfide-bonded.

In terms of assembly, monomer.

Its subcellular location is the cytoplasm. In terms of biological role, participates in various redox reactions through the reversible oxidation of its active center dithiol to a disulfide and catalyzes dithiol-disulfide exchange reactions. This is Thiol-disulfide oxidoreductase YkuV (ykuV) from Bacillus subtilis (strain 168).